The sequence spans 321 residues: Glucokinase (321 aa).

8–13 (GDVGGT) serves as a coordination point for ATP.

Belongs to the bacterial glucokinase family.

The protein resides in the cytoplasm. The enzyme catalyses D-glucose + ATP = D-glucose 6-phosphate + ADP + H(+). The chain is Glucokinase from Shigella boydii serotype 18 (strain CDC 3083-94 / BS512).